A 455-amino-acid chain; its full sequence is tRNA modification GTPase MnmE (455 aa).

(6S)-5-formyl-5,6,7,8-tetrahydrofolate-binding residues include lysine 29, glutamate 91, and arginine 131. The region spanning 226–378 is the TrmE-type G domain; it reads GLKVALVGLP…LIQELLKLAG (153 aa). K(+) is bound at residue asparagine 236. Residues 236-241, 255-261, 280-283, and 341-344 contribute to the GTP site; these read NVGKSS, TDLPGTT, DTAG, and NKAD. Mg(2+) is bound at residue serine 240. Residues threonine 255, leucine 257, and threonine 260 each contribute to the K(+) site. Residue threonine 261 participates in Mg(2+) binding. Lysine 455 contributes to the (6S)-5-formyl-5,6,7,8-tetrahydrofolate binding site.

This sequence belongs to the TRAFAC class TrmE-Era-EngA-EngB-Septin-like GTPase superfamily. TrmE GTPase family. Homodimer. Heterotetramer of two MnmE and two MnmG subunits. K(+) serves as cofactor.

It localises to the cytoplasm. Exhibits a very high intrinsic GTPase hydrolysis rate. Involved in the addition of a carboxymethylaminomethyl (cmnm) group at the wobble position (U34) of certain tRNAs, forming tRNA-cmnm(5)s(2)U34. This Prochlorococcus marinus (strain SARG / CCMP1375 / SS120) protein is tRNA modification GTPase MnmE.